We begin with the raw amino-acid sequence, 172 residues long: Ribosome maturation factor RimM (172 aa).

Positions 96–168 (DGEFYYHEII…RVDVEIPEGL (73 aa)) constitute a PRC barrel domain.

Belongs to the RimM family. Binds ribosomal protein uS19.

The protein localises to the cytoplasm. In terms of biological role, an accessory protein needed during the final step in the assembly of 30S ribosomal subunit, possibly for assembly of the head region. Essential for efficient processing of 16S rRNA. May be needed both before and after RbfA during the maturation of 16S rRNA. It has affinity for free ribosomal 30S subunits but not for 70S ribosomes. The protein is Ribosome maturation factor RimM of Streptococcus sanguinis (strain SK36).